Consider the following 398-residue polypeptide: uncharacterized protein (398 aa).

Lysine 212 bears the N6-(pyridoxal phosphate)lysine mark.

Belongs to the trans-sulfuration enzymes family. Pyridoxal 5'-phosphate serves as cofactor.

This is an uncharacterized protein from Schizosaccharomyces pombe (strain 972 / ATCC 24843) (Fission yeast).